Reading from the N-terminus, the 719-residue chain is Forkhead box protein K1 (719 aa).

A2 bears the N-acetylalanine mark. The interval 2–40 is interaction with SIN3A and SIN3B; that stretch reads AEVGEDSGARALLALRSAPCSPVLCAAAAAAAFPATTSP. The segment at 35-67 is disordered; the sequence is PATTSPPPPAQPPPGPPALPAEPGPGPVPSTVA. Positions 38 to 62 are enriched in pro residues; it reads TSPPPPAQPPPGPPALPAEPGPGPV. The interval 81-406 is required for interaction with FOXO4 and MEF2C; it reads AASVRQSPGP…PLSSRSAPAS (326 aa). S87 is modified (phosphoserine). The 53-residue stretch at 109–161 folds into the FHA domain; it reads VTIGRNSSQGSVDLSMGLSSFISRRHLQLSFQEPHFYLRCLGKNGVFVDGAFQ. Omega-N-methylarginine occurs at positions 147 and 177. Phosphoserine occurs at positions 199, 209, 225, and 229. Phosphothreonine occurs at positions 231 and 233. Residues S239, S243, S281, and S285 each carry the phosphoserine modification. The fork-head DNA-binding region spans 291 to 386; it reads KPPYSYAQLI…EQAFRKRRQR (96 aa). A disordered region spans residues 399–443; it reads SSRSAPASPTHPGLMSPRSSGLQTPECLSREGSPIPHDPDLGSKL. S402 and S406 each carry phosphoserine. Residue T408 is modified to Phosphothreonine. S414 carries the post-translational modification Phosphoserine. Position 422 is a phosphothreonine (T422). Residues S427, S431, and S445 each carry the phosphoserine modification. Positions 665 to 685 are enriched in low complexity; that stretch reads AANAAPTPAASTTTSASSSGE. The segment at 665-719 is disordered; sequence AANAAPTPAASTTTSASSSGEPEVKRSRVEEPGGTATTQPTAMAATGPQGPGTGE. Positions 686-695 are enriched in basic and acidic residues; sequence PEVKRSRVEE. Positions 696–712 are enriched in low complexity; sequence PGGTATTQPTAMAATGP.

In terms of assembly, interacts with SIN3A and SIN3B (via PAH2) to form a complex which represses transcription. Component of SIN3A-, but not SIN3B-, containing multiprotein complexes. Interacts with FOXO4 and MEF2C; both interactions inhibit FOXO4 and MEF2C transactivation activity. Interacts (when phosphorylated) with YWHAE/14-3-3-epsilon; promotes sequestration in the cytoplasm and leads to impaired ability to bind DNA. Interacts with FHL2. Interacts with SRF. Interacts with DVL2 and DVL3; the interaction induces DVL2 nuclear translocation. Interacts with BAP1 (when phosphorylated). Accessory component of the polycomb repressive deubiquitinase (PR-DUB) complex, at least composed of BAP1, one of ASXL1, ASXL2 or (probably) ASXL3 and one of MBD5 or MBD6. The PR-DUB core associates with a number of accessory proteins, including FOXK1, FOXK2, KDM1B, HCFC1 and OGT. Post-translationally, phosphorylation by GSK3 (GSK3A or GSK3B) promotes interaction with YWHAE/14-3-3-epsilon and retention in the cytoplasm. In response to mTORC1 signaling, phosphorylation by GSK3 is prevented, leading to translocation to the nucleus. In terms of tissue distribution, expressed in tissues and cells in which the myoglobin gene is transcriptionally active including cardiac and skeletal myocytes, brain and kidney. In the adult brain, expressed in the piriform cortex and the indusium griseum. In the hippocampus, expression is localized to the dentate gyrus and CA3 area. In the cerebellum, expression is confined to the Purkinje cell layer. Present in neuroretinal cells: expressed in rod bipolar cells, amacrine cells and ganglion cells (at protein level).

The protein localises to the nucleus. Its subcellular location is the cytoplasm. Functionally, transcriptional regulator involved in different processes such as glucose metabolism, aerobic glycolysis, muscle cell differentiation and autophagy. Recognizes and binds the forkhead DNA sequence motif (5'-GTAAACA-3') and can both act as a transcription activator or repressor, depending on the context. Together with FOXK2, acts as a key regulator of metabolic reprogramming towards aerobic glycolysis, a process in which glucose is converted to lactate in the presence of oxygen. Acts by promoting expression of enzymes for glycolysis (such as hexokinase-2 (HK2), phosphofructokinase, pyruvate kinase (PKLR) and lactate dehydrogenase), while suppressing further oxidation of pyruvate in the mitochondria by up-regulating pyruvate dehydrogenase kinases PDK1 and PDK4. Probably plays a role in gluconeogenesis during overnight fasting, when lactate from white adipose tissue and muscle is the main substrate. Involved in mTORC1-mediated metabolic reprogramming: in response to mTORC1 signaling, translocates into the nucleus and regulates the expression of genes associated with glycolysis and downstream anabolic pathways, such as HIF1A, thereby regulating glucose metabolism. Together with FOXK2, acts as a negative regulator of autophagy in skeletal muscle: in response to starvation, enters the nucleus, binds the promoters of autophagy genes and represses their expression, preventing proteolysis of skeletal muscle proteins. Acts as a transcriptional regulator of the myogenic progenitor cell population in skeletal muscle. Binds to the upstream enhancer region (CCAC box) of myoglobin (MB) gene, regulating the myogenic progenitor cell population. Promotes muscle progenitor cell proliferation by repressing the transcriptional activity of FOXO4, thereby inhibiting myogenic differentiation. Involved in remodeling processes of adult muscles that occur in response to physiological stimuli. Required to correct temporal orchestration of molecular and cellular events necessary for muscle repair. Represses myogenic differentiation by inhibiting MEFC activity. Positively regulates Wnt/beta-catenin signaling by translocating DVL into the nucleus. Reduces virus replication, probably by binding the interferon stimulated response element (ISRE) to promote antiviral gene expression. Accessory component of the polycomb repressive deubiquitinase (PR-DUB) complex; recruits the PR-DUB complex to specific FOXK1-bound genes. In Mus musculus (Mouse), this protein is Forkhead box protein K1.